We begin with the raw amino-acid sequence, 895 residues long: Histone-lysine N-methyltransferase EZ3 (895 aa).

Residues 1–13 (MASSSKASDSSSQ) show a composition bias toward low complexity. 2 disordered regions span residues 1-30 (MASS…APAS) and 396-446 (SSVS…PGKR). Residues 396-422 (SSVSAEESTTPPSADTSETENASSDMP) show a composition bias toward polar residues. A compositionally biased stretch (basic residues) spans 427 to 436 (RKYKISKRGP). One can recognise an SANT domain in the interval 528–578 (TLSCWSALERDLYLKGIEIFGKNSCLIARNLLSGMKTCMEVANYMYNNGAA). The 105-residue stretch at 628–732 (AGHPTVRKRI…SLGEPPARGD (105 aa)) folds into the CXC domain. Positions 747-862 (QRILLGRSDV…ASEELFYDYR (116 aa)) constitute an SET domain. A disordered region spans residues 870-895 (AWARRPEGSKKDEASVSHHRAHKVAR). The span at 873 to 885 (RRPEGSKKDEASV) shows a compositional bias: basic and acidic residues. The segment covering 886–895 (SHHRAHKVAR) has biased composition (basic residues).

The protein belongs to the class V-like SAM-binding methyltransferase superfamily. Histone-lysine methyltransferase family. EZ subfamily. In terms of tissue distribution, widely expressed.

The protein localises to the nucleus. The catalysed reaction is L-lysyl(27)-[histone H3] + 3 S-adenosyl-L-methionine = N(6),N(6),N(6)-trimethyl-L-lysyl(27)-[histone H3] + 3 S-adenosyl-L-homocysteine + 3 H(+). Polycomb group (PcG) protein. Catalytic subunit of some PcG multiprotein complex, which methylates 'Lys-27' of histone H3, leading to transcriptional repression of the affected target genes. PcG proteins are not required to initiate repression, but to maintain it during later stages of development. The protein is Histone-lysine N-methyltransferase EZ3 (EZ3) of Zea mays (Maize).